The chain runs to 141 residues: ATP synthase epsilon chain (141 aa).

The protein belongs to the ATPase epsilon chain family. As to quaternary structure, F-type ATPases have 2 components, CF(1) - the catalytic core - and CF(0) - the membrane proton channel. CF(1) has five subunits: alpha(3), beta(3), gamma(1), delta(1), epsilon(1). CF(0) has three main subunits: a, b and c.

The protein localises to the cell inner membrane. In terms of biological role, produces ATP from ADP in the presence of a proton gradient across the membrane. The sequence is that of ATP synthase epsilon chain from Halorhodospira halophila (strain DSM 244 / SL1) (Ectothiorhodospira halophila (strain DSM 244 / SL1)).